The sequence spans 149 residues: Protein FAM72C (149 aa).

Belongs to the FAM72 family.

The chain is Protein FAM72C (FAM72C) from Homo sapiens (Human).